The following is a 116-amino-acid chain: Classical arabinogalactan protein 25 (116 aa).

The first 28 residues, 1–28 (MAFSFLNKLLIIFIFIFISLSSSSPTIS), serve as a signal peptide directing secretion. Residues 40–95 (LLPSPGDALPSDDGSGTIPSSPSPPDPDTNDGSYPDPLAFSPFASPPVSSPSPPPS) are disordered. Low complexity-rich tracts occupy residues 50–59 (SDDGSGTIPS) and 69–82 (NDGS…FSPF). Pro residues predominate over residues 83–95 (ASPPVSSPSPPPS). Ser-89 carries the GPI-anchor amidated serine lipid modification. The propeptide at 90–116 (PSPPPSLPSAGVLLISLIISSASFLAL) is removed in mature form.

This sequence belongs to the classical AGP family. O-glycosylated on the hydroxyproline residues.

The protein resides in the cell membrane. Proteoglycan that seems to be implicated in diverse developmental roles such as differentiation, cell-cell recognition, embryogenesis and programmed cell death. The protein is Classical arabinogalactan protein 25 (AGP25) of Arabidopsis thaliana (Mouse-ear cress).